The chain runs to 341 residues: Anthranilate phosphoribosyltransferase (341 aa).

5-phospho-alpha-D-ribose 1-diphosphate is bound by residues G79, 82 to 83 (GD), T87, 89 to 92 (NIST), 107 to 115 (KHGNRAVSS), and S119. G79 provides a ligand contact to anthranilate. A Mg(2+)-binding site is contributed by S91. Position 110 (N110) interacts with anthranilate. R165 contributes to the anthranilate binding site. Mg(2+)-binding residues include D224 and E225.

Belongs to the anthranilate phosphoribosyltransferase family. As to quaternary structure, homodimer. The cofactor is Mg(2+).

It catalyses the reaction N-(5-phospho-beta-D-ribosyl)anthranilate + diphosphate = 5-phospho-alpha-D-ribose 1-diphosphate + anthranilate. It functions in the pathway amino-acid biosynthesis; L-tryptophan biosynthesis; L-tryptophan from chorismate: step 2/5. Functionally, catalyzes the transfer of the phosphoribosyl group of 5-phosphorylribose-1-pyrophosphate (PRPP) to anthranilate to yield N-(5'-phosphoribosyl)-anthranilate (PRA). The chain is Anthranilate phosphoribosyltransferase from Bacillus cereus (strain ATCC 14579 / DSM 31 / CCUG 7414 / JCM 2152 / NBRC 15305 / NCIMB 9373 / NCTC 2599 / NRRL B-3711).